We begin with the raw amino-acid sequence, 237 residues long: ADTIVAVELDSYPNTDIGDPSYPHIGIDIKSVRSKSTARWNMQTGKVGTAHISYNSVAKRLSAVVSYTGSSSTTVSYDVDLNNVLPEWVRVGLSATTGLYKETNTILSWSFTSKLKTNSIADANSLHFSFNQFSQNPKDLILQGDATTDSDGNLQLTRVSSDGSPQGSSVGRALFYAPVHIWEKSAVVASFDATFTFLIKSPDRDPADGITFFIANTDTSIPSGSGGRLLGLFPDAN.

Mn(2+) contacts are provided by E8 and D10. D10, Y12, N14, and D19 together coordinate Ca(2+). Y12 contributes to the a carbohydrate binding site. D19 and H24 together coordinate Mn(2+). Residue 99–100 (LY) participates in a carbohydrate binding. A Ca(2+)-binding site is contributed by D208. R228 contributes to the a carbohydrate binding site.

The protein belongs to the leguminous lectin family. As to quaternary structure, equilibrium between homodimer and homotetramer. Oligomerization is pH-dependent with homotetramers forming at pH 6.5 and above. Post-translationally, the beta and gamma chains are produced by partial proteolytic processing of the lectin alpha chain by an asparaginyl endopeptidase. Mixture of 60% alpha lectin and 40% of its beta and gamma proteolytic fragments. Seed.

The protein localises to the vacuole. It is found in the aleurone grain. In terms of biological role, D-mannose/D-glucose-binding lectin. Has anti-inflammatory activity in rats. Induces histamine release in mast cells from hamster and rat. Induces lymphocyte proliferation and IFNG production. Shows toxicity against the aquatic snail B.glabrata at concentrations higher than 20 ug/ml. This Dioclea virgata protein is Lectin alpha chain.